Here is a 196-residue protein sequence, read N- to C-terminus: dCTP deaminase (196 aa).

DCTP is bound by residues 113-118 (RSSLAR), Asp-131, 139-141 (VLE), Tyr-174, Lys-181, and Gln-185. The Proton donor/acceptor role is filled by Glu-141.

The protein belongs to the dCTP deaminase family. As to quaternary structure, homotrimer.

The catalysed reaction is dCTP + H2O + H(+) = dUTP + NH4(+). The protein operates within pyrimidine metabolism; dUMP biosynthesis; dUMP from dCTP (dUTP route): step 1/2. Catalyzes the deamination of dCTP to dUTP. This Wigglesworthia glossinidia brevipalpis protein is dCTP deaminase.